Reading from the N-terminus, the 308-residue chain is MGVEIPVGRKATVKVPASTANLGPGFDTLGLALGLYDYVTAEVIESGLEVEVTGEGEGEVPLDERHLVVRALRATLKEADVTVPGLRVSCTNSIPQSRGLGSSAAAATAGVAAGNGLAGFTLDDQAQVQIASTFEGHPDNAGASVLGAGVVSWTNTPIDGVSAPAYHARRIDVHPDIKATAFIPDFHASTEAIRRVLPSDISHVDARFNVSRTAVMTVALRDDPDLLWEGTRDRMHQTYRAEVLPVTAEWVNRLRNLGYPAFLSGAGPTILVLSTEPVDNALVEEARGRGMKVLELGIAGPVEVDVTG.

95–105 (PQSRGLGSSAA) contributes to the ATP binding site.

This sequence belongs to the GHMP kinase family. Homoserine kinase subfamily.

It is found in the cytoplasm. It carries out the reaction L-homoserine + ATP = O-phospho-L-homoserine + ADP + H(+). It functions in the pathway amino-acid biosynthesis; L-threonine biosynthesis; L-threonine from L-aspartate: step 4/5. Functionally, catalyzes the ATP-dependent phosphorylation of L-homoserine to L-homoserine phosphate. The polypeptide is Homoserine kinase (Corynebacterium jeikeium (strain K411)).